We begin with the raw amino-acid sequence, 238 residues long: Accessory gene regulator A (238 aa).

The Response regulatory domain maps to 2–125 (KIFICEDDPK…LRTRIIDCLE (124 aa)). Aspartate 59 is subject to 4-aspartylphosphate. An HTH LytTR-type domain is found at 143–238 (IELKRGSNSV…YASVRNVKKK (96 aa)).

It localises to the cytoplasm. Its function is as follows. Required for high-level post-exponential phase expression of a series of secreted proteins. This chain is Accessory gene regulator A (agrA), found in Staphylococcus aureus (strain Mu50 / ATCC 700699).